Reading from the N-terminus, the 199-residue chain is Prolactin-2 (199 aa).

3 disulfide bridges follow: cysteine 4/cysteine 11, cysteine 58/cysteine 174, and cysteine 191/cysteine 199.

This sequence belongs to the somatotropin/prolactin family.

It is found in the secreted. In Alligator mississippiensis (American alligator), this protein is Prolactin-2.